We begin with the raw amino-acid sequence, 635 residues long: MITVRLPDGSQREFDTPVTVAQVAANIGAGLAKAALAGKVNGNVVDTSYLIEQDSDLSIITDKDAEGLDVIRHSTAHLLAYAVKELFPDAQVTIGPVIENGFYYDFSYKRPFTPEDLLAIEKKMAELAKKDEPVTRQVLPRDVAVEYFKSIGEAYKAEIIASIPADQDVSLYTEGKFTDLCRGPHVPSTGKLKVFKLMKLAGAYWRGDSKNEMLQRIYGTAWAKKEEQEAYLTMLEEAEKRDHRKLGRALDLFHFQEEAPGLIFWHPKGWTVWQQVEQYMRRVYQDNGYQEVKAPQILDRSLWEKSGHWENYKENMFTTESENRSYALKPMNCPGHVQIFASDLRSYRELPLRYGEFGQCHRNEPSGSLHGMMRVRGFTQDDGHIFCTEDQILDECVAFTALLQKVYRDFGFTNVIYKVATRPEKRVGSDEAWDKAEAALIASLDRSGCTYEISPGEGAFYGPKIEYTLKDAIGRMWQCGTIQVDFSMPARLGAEYVAEDNTKKIPVMLHRAILGSFERFIGMLIENHAGALPLWLAPVQIAVLNISDAQADYAQAVAQNLKKQGFRVHVDLRNEKITYKIREHSIQKLPYIIVIGDKERDAGTVAVRARGNVDLGVMPVDLLVERLNNEVEAKA.

One can recognise a TGS domain in the interval 1 to 61; sequence MITVRLPDGS…EQDSDLSIIT (61 aa). The tract at residues 242–533 is catalytic; it reads DHRKLGRALD…LIENHAGALP (292 aa). The Zn(2+) site is built by cysteine 333, histidine 384, and histidine 510.

Belongs to the class-II aminoacyl-tRNA synthetase family. Homodimer. Zn(2+) is required as a cofactor.

It localises to the cytoplasm. It catalyses the reaction tRNA(Thr) + L-threonine + ATP = L-threonyl-tRNA(Thr) + AMP + diphosphate + H(+). Catalyzes the attachment of threonine to tRNA(Thr) in a two-step reaction: L-threonine is first activated by ATP to form Thr-AMP and then transferred to the acceptor end of tRNA(Thr). Also edits incorrectly charged L-seryl-tRNA(Thr). The chain is Threonine--tRNA ligase from Herminiimonas arsenicoxydans.